The following is a 171-amino-acid chain: UPF0398 protein spyM18_1659 (171 aa).

This sequence belongs to the UPF0398 family.

This Streptococcus pyogenes serotype M18 (strain MGAS8232) protein is UPF0398 protein spyM18_1659.